A 636-amino-acid polypeptide reads, in one-letter code: Amylosucrase (636 aa).

Residues Asp-152, His-195, Gln-262, and Arg-292 each coordinate substrate. Residue Asp-294 is the Nucleophile of the active site. Glu-336 functions as the Proton donor in the catalytic mechanism. Substrate is bound by residues His-400, Asp-401, and Arg-517.

The protein belongs to the glycosyl hydrolase 13 family. As to quaternary structure, monomer.

It is found in the secreted. It catalyses the reaction [(1-&gt;4)-alpha-D-glucosyl](n) + sucrose = [(1-&gt;4)-alpha-D-glucosyl](n+1) + D-fructose. With respect to regulation, amylosucrase favors hydrolysis at low sucrose concentrations, and polymerization at high sucrose concentrations. Competitively inhibited by fructose. Catalyzes the synthesis of alpha-glucan from sucrose. Catalyzes, in addition, sucrose hydrolysis, maltose and maltotriose synthesis by successive transfers of the glucosyl moiety of sucrose onto the released glucose, and finally turanose and trehalulose synthesis, these two sucrose isomers being obtained by glucosyl transfer onto fructose. The protein is Amylosucrase (ams) of Neisseria polysaccharea.